Here is a 143-residue protein sequence, read N- to C-terminus: MKIIATNKNAKRNYEILKTFEAGIKLEGWEVKSARASSVELKNAYCSIYKDEVFLKESYFKKYMLLKVEETKNRKLLLHKKEILKIKQELQKNLSLIPTKIYFNSNSLIKVELALGRGLKKYDKREKLKKEEVEKKLKKILKF.

This sequence belongs to the SmpB family.

It localises to the cytoplasm. Its function is as follows. Required for rescue of stalled ribosomes mediated by trans-translation. Binds to transfer-messenger RNA (tmRNA), required for stable association of tmRNA with ribosomes. tmRNA and SmpB together mimic tRNA shape, replacing the anticodon stem-loop with SmpB. tmRNA is encoded by the ssrA gene; the 2 termini fold to resemble tRNA(Ala) and it encodes a 'tag peptide', a short internal open reading frame. During trans-translation Ala-aminoacylated tmRNA acts like a tRNA, entering the A-site of stalled ribosomes, displacing the stalled mRNA. The ribosome then switches to translate the ORF on the tmRNA; the nascent peptide is terminated with the 'tag peptide' encoded by the tmRNA and targeted for degradation. The ribosome is freed to recommence translation, which seems to be the essential function of trans-translation. This Mycoplasmopsis synoviae (strain 53) (Mycoplasma synoviae) protein is SsrA-binding protein.